Reading from the N-terminus, the 132-residue chain is uncharacterized protein (132 aa).

WD repeat units follow at residues 14-53 (DLQD…LEIL) and 58-97 (AHDD…LANV).

This is an uncharacterized protein from Acanthamoeba polyphaga (Amoeba).